The following is a 476-amino-acid chain: Cys-Gly metallodipeptidase dug1 (476 aa).

Zn(2+) is bound at residue His-99. Asp-101 is a catalytic residue. Position 133 (Asp-133) interacts with Zn(2+). Residue Glu-167 is the Proton acceptor of the active site. Glu-168, Asp-196, and His-446 together coordinate Zn(2+).

The protein belongs to the peptidase M20A family. As to quaternary structure, homodimer. Component of the GSH degradosomal complex. The cofactor is Zn(2+). Mn(2+) is required as a cofactor.

The protein resides in the cytoplasm. Catalytic component of the GSH degradosomal complex involved in the degradation of glutathione (GSH) and other peptides containing a gamma-glu-X bond. Has a Gly-Cys dipeptidase activity. This Schizosaccharomyces pombe (strain 972 / ATCC 24843) (Fission yeast) protein is Cys-Gly metallodipeptidase dug1 (dug1).